Reading from the N-terminus, the 488-residue chain is Diacylglycerol O-acyltransferase 1 (488 aa).

The segment at 1-57 (MGDRGSSRRRRTGSRPSSHGGGGPAAAEEEVRDAAAGPDVGAAGDAPAPAPNKDGDA) is disordered. Over 1–83 (MGDRGSSRRR…SLFSSDSGFS (83 aa)) the chain is Cytoplasmic. The tract at residues 1 to 91 (MGDRGSSRRR…FSNYRGILNW (91 aa)) is involved in homomerization. Ser17 and Ser18 each carry phosphoserine. A compositionally biased stretch (low complexity) spans 34–47 (AAAGPDVGAAGDAP). A helical membrane pass occupies residues 84–118 (NYRGILNWCVVMLILSNARLFLENLIKYGILVDPI). At 119-130 (QVVSLFLKDPYS) the chain is on the lumenal side. The segment at 119 to 130 (QVVSLFLKDPYS) is extracellular loop 1 (EL1). Residues 131–156 (WPAPCLVIAANVFAVAAFQVEKRLAV) traverse the membrane as a helical segment. The segment at 131–488 (WPAPCLVIAA…LNYEAPAAEA (358 aa)) is MBOAT fold. Over 157–161 (GALTE) the chain is Cytoplasmic. The chain crosses the membrane as a helical span at residues 162-184 (QAGLLLHVANLATILCFPAAVVL). Over 185–191 (LVESITP) the chain is Lumenal. A helical transmembrane segment spans residues 192 to 223 (VGSLLALMAHTILFLKLFSYRDVNSWCRRARA). At 224-273 (KAASAGKKASSAAAPHTVSYPDNLTYRDLYYFLFAPTLCYELNFPRSPRI) the chain is on the cytoplasmic side. The intracellular loop 1 (IL1) stretch occupies residues 224-276 (KAASAGKKASSAAAPHTVSYPDNLTYRDLYYFLFAPTLCYELNFPRSPRIRKR). A helical membrane pass occupies residues 274–308 (RKRFLLRRILEMLFFTQLQVGLIQQWMVPTIQNSM). The Lumenal segment spans residues 309 to 315 (KPFKDMD). A helical transmembrane segment spans residues 316-353 (YSRIIERLLKLAVPNHLIWLIFFYWLFHSCLNAVAELM). At 354-399 (QFGDREFYRDWWNSESVTYFWQNWNIPVHKWCIRHFYKPMLRRGSS) the chain is on the cytoplasmic side. Positions 354–399 (QFGDREFYRDWWNSESVTYFWQNWNIPVHKWCIRHFYKPMLRRGSS) are intracellular loop 2 (IL2). The FYXDWWN motif signature appears at 360-366 (FYRDWWN). An acyl-CoA is bound by residues 374–382 (WQNWNIPVH), Tyr390, and Arg404. Residues 380 to 394 (PVHKWCIRHFYKPML) are amphipathic helix (AH). A helical membrane pass occupies residues 400 to 420 (KWMARTGVFLASAFFHEYLVS). His415 is a catalytic residue. Over 421-428 (VPLRMFRL) the chain is Lumenal. Residues 429–447 (WAFTGMMAQIPLAWFVGRF) traverse the membrane as a helical segment. The Cytoplasmic portion of the chain corresponds to 448 to 449 (FQ). A helical transmembrane segment spans residues 450–481 (GNYGNAAVWLSLIIGQPIAVLMYVHDYYVLNY). Position 477 (Tyr477) interacts with an acyl-CoA. Topologically, residues 482–488 (EAPAAEA) are lumenal.

This sequence belongs to the membrane-bound acyltransferase family. Sterol o-acyltransferase subfamily. Homodimer or homotetramer; both forms have similar enzymatic activities.

The protein resides in the endoplasmic reticulum membrane. The catalysed reaction is an acyl-CoA + a 1,2-diacyl-sn-glycerol = a triacyl-sn-glycerol + CoA. It catalyses the reaction all-trans-retinol + an acyl-CoA = an all-trans-retinyl ester + CoA. It carries out the reaction 2-(9Z-octadecenoyl)-glycerol + (9Z)-octadecenoyl-CoA = 1,2-di-(9Z-octadecenoyl)-sn-glycerol + CoA. The enzyme catalyses 1,2-di-(9Z-octadecenoyl)-sn-glycerol + (9Z)-octadecenoyl-CoA = 1,2,3-tri-(9Z-octadecenoyl)-glycerol + CoA. The catalysed reaction is all-trans-retinol + hexadecanoyl-CoA = all-trans-retinyl hexadecanoate + CoA. It catalyses the reaction 1-O-(9Z-octadecenyl)-glycerol + (9Z)-octadecenoyl-CoA = 1-O-(9Z-octadecyl)-3-(9Z-octadecenoyl)-glycerol + CoA. It carries out the reaction 1-O-(9Z-octadecyl)-3-(9Z-octadecenoyl)-glycerol + (9Z)-octadecenoyl-CoA = 1-O-(9Z-octadecenyl)-2,3-di-(9Z-octadecenoyl)glycerol + CoA. The enzyme catalyses 1-(9Z-octadecenoyl)-glycerol + (9Z)-octadecenoyl-CoA = 1,2-di-(9Z-octadecenoyl)-glycerol + CoA. The catalysed reaction is 1,2-di-(9Z-octadecenoyl)-glycerol + (9Z)-octadecenoate + H(+) = 1,2,3-tri-(9Z-octadecenoyl)-glycerol + H2O. It catalyses the reaction 1-octadecanoyl-2-(5Z,8Z,11Z,14Z-eicosatetraenoyl)-sn-glycerol + (9Z)-octadecenoyl-CoA = 1-octadecanoyl-2-(5Z,8Z,11Z,14Z)-eicosatetraenoyl-3-(9Z)-octadecenoyl-sn-glycerol + CoA. It carries out the reaction hexadecane-1,2-diol + 2 hexadecanoyl-CoA = 1,2-O,O-dihexadecanoyl-1,2-hexadecanediol + 2 CoA. The enzyme catalyses hexadecane-1,2-diol + hexadecanoyl-CoA = 2-hydroxyhexadecyl hexadecanoate + CoA. The catalysed reaction is 2-(9Z-octadecenoyl)-glycerol + hexadecanoyl-CoA = 1-hexadecanoyl-2-(9Z-octadecenoyl)-sn-glycerol + CoA. It catalyses the reaction 1,2-di-(9Z-octadecenoyl)-sn-glycerol + hexadecanoyl-CoA = 1,2-di-(9Z)-octadecenoyl-3-hexadecanoyl-sn-glycerol + CoA. It carries out the reaction hexadecan-1-ol + hexadecanoyl-CoA = hexadecanyl hexadecanoate + CoA. The enzyme catalyses 13-cis-retinol + hexadecanoyl-CoA = 13-cis-retinyl hexadecanoate + CoA. The catalysed reaction is 1,3-di-(9Z-octadecenoyl)-glycerol + (9Z)-octadecenoyl-CoA = 1,2,3-tri-(9Z-octadecenoyl)-glycerol + CoA. It catalyses the reaction 2,3-di-(9Z)-octadecenoyl-sn-glycerol + (9Z)-octadecenoyl-CoA = 1,2,3-tri-(9Z-octadecenoyl)-glycerol + CoA. It participates in lipid metabolism; glycerolipid metabolism. With respect to regulation, XP620 is a selective DGAT1 inhibitor. Catalyzes the terminal and only committed step in triacylglycerol synthesis by using diacylglycerol and fatty acyl CoA as substrates. Highly expressed in epithelial cells of the small intestine and its activity is essential for the absorption of dietary fats. In liver, plays a role in esterifying exogenous fatty acids to glycerol, and is required to synthesize fat for storage. Also present in female mammary glands, where it produces fat in the milk. May be involved in VLDL (very low density lipoprotein) assembly. In contrast to DGAT2 it is not essential for survival. Functions as the major acyl-CoA retinol acyltransferase (ARAT) in the skin, where it acts to maintain retinoid homeostasis and prevent retinoid toxicity leading to skin and hair disorders. Exhibits additional acyltransferase activities, includin acyl CoA:monoacylglycerol acyltransferase (MGAT), wax monoester and wax diester synthases. Also able to use 1-monoalkylglycerol (1-MAkG) as an acyl acceptor for the synthesis of monoalkyl-monoacylglycerol (MAMAG). The sequence is that of Diacylglycerol O-acyltransferase 1 from Homo sapiens (Human).